We begin with the raw amino-acid sequence, 502 residues long: ATP synthase subunit alpha (502 aa).

169–176 (GDRQTGKT) contributes to the ATP binding site.

This sequence belongs to the ATPase alpha/beta chains family. F-type ATPases have 2 components, CF(1) - the catalytic core - and CF(0) - the membrane proton channel. CF(1) has five subunits: alpha(3), beta(3), gamma(1), delta(1), epsilon(1). CF(0) has three main subunits: a(1), b(2) and c(9-12). The alpha and beta chains form an alternating ring which encloses part of the gamma chain. CF(1) is attached to CF(0) by a central stalk formed by the gamma and epsilon chains, while a peripheral stalk is formed by the delta and b chains.

Its subcellular location is the cell inner membrane. The catalysed reaction is ATP + H2O + 4 H(+)(in) = ADP + phosphate + 5 H(+)(out). Produces ATP from ADP in the presence of a proton gradient across the membrane. The alpha chain is a regulatory subunit. The sequence is that of ATP synthase subunit alpha from Geotalea daltonii (strain DSM 22248 / JCM 15807 / FRC-32) (Geobacter daltonii).